A 462-amino-acid polypeptide reads, in one-letter code: Arginine-specific demethylase JMJ20 (462 aa).

A JmjC domain is found at 115 to 287 (VKEYPDYTAY…WVWDLLWKDY (173 aa)). 3 residues coordinate Fe cation: His177, Asp179, and His255.

The protein belongs to the JARID1 histone demethylase family. Fe(2+) serves as cofactor. Mostly expressed in leaves, and, to a lower extent, in inflorescences, roots, siliques and stems.

It is found in the nucleus. The catalysed reaction is N(omega),N(omega)-dimethyl-L-arginyl-[protein] + 2-oxoglutarate + O2 = N(omega)-methyl-L-arginyl-[protein] + formaldehyde + succinate + CO2. Its function is as follows. Histone demethylase that demethylates 'Arg-3' (H4R3me) of histone H4 with a specific activity for H4R3me2. Involved in the positive regulation of gene expression. Together with JMJ22, positively regulates seed germination by promoting the removal of repressive histone arginine methylations (e.g. H4R3me2) at GA3ox1 and GA3ox2 to trigger gibberellic acid (GA) biosynthesis. The sequence is that of Arginine-specific demethylase JMJ20 from Arabidopsis thaliana (Mouse-ear cress).